The following is a 290-amino-acid chain: UPF0761 membrane protein YihY (290 aa).

A run of 6 helical transmembrane segments spans residues 44–64, 104–124, 140–160, 183–203, 210–230, and 244–264; these read LLSLVPLVAVVFALFAAFPMF, VGACGLIVTALLLMYSIDSAL, FAVYWMILTLGPLLAGASLAI, IFPLLLSWISFWLLYSIVPTI, AIVGAFVAALLFEAGKKGFAL, and VLAVIPILFVWVYWTWCIVLL.

It belongs to the UPF0761 family.

The protein resides in the cell inner membrane. This is UPF0761 membrane protein YihY from Escherichia coli O7:K1 (strain IAI39 / ExPEC).